A 122-amino-acid polypeptide reads, in one-letter code: uncharacterized protein (122 aa).

This is an uncharacterized protein from Methanothermobacter thermautotrophicus (Methanobacterium thermoformicicum).